We begin with the raw amino-acid sequence, 219 residues long: Proline-rich protein 27 (219 aa).

The N-terminal stretch at 1-15 (MKLLLWACIVCVAFA) is a signal peptide. Residues 155–204 (AAEPAAEAPVGAEPAAEAPVAAEPAAEAPVGVEPAAEEPSPAEPATAKPA) are compositionally biased toward low complexity. The segment at 155 to 219 (AAEPAAEAPV…PSPSLEQANQ (65 aa)) is disordered.

The protein localises to the secreted. This is Proline-rich protein 27 (PRR27) from Homo sapiens (Human).